The following is a 198-amino-acid chain: FMN-dependent NADH:quinone oxidoreductase (198 aa).

92–95 (MWNL) is a binding site for FMN.

The protein belongs to the azoreductase type 1 family. As to quaternary structure, homodimer. FMN serves as cofactor.

The catalysed reaction is 2 a quinone + NADH + H(+) = 2 a 1,4-benzosemiquinone + NAD(+). It carries out the reaction N,N-dimethyl-1,4-phenylenediamine + anthranilate + 2 NAD(+) = 2-(4-dimethylaminophenyl)diazenylbenzoate + 2 NADH + 2 H(+). Its function is as follows. Quinone reductase that provides resistance to thiol-specific stress caused by electrophilic quinones. Also exhibits azoreductase activity. Catalyzes the reductive cleavage of the azo bond in aromatic azo compounds to the corresponding amines. The polypeptide is FMN-dependent NADH:quinone oxidoreductase (Lachnoclostridium phytofermentans (strain ATCC 700394 / DSM 18823 / ISDg) (Clostridium phytofermentans)).